Consider the following 292-residue polypeptide: Pyridoxal 5'-phosphate synthase subunit PdxS (292 aa).

Asp22 is a D-ribose 5-phosphate binding site. Catalysis depends on Lys79, which acts as the Schiff-base intermediate with D-ribose 5-phosphate. Gly151 provides a ligand contact to D-ribose 5-phosphate. Arg163 lines the D-glyceraldehyde 3-phosphate pocket. D-ribose 5-phosphate contacts are provided by residues Gly212 and 233–234 (GS).

It belongs to the PdxS/SNZ family. In the presence of PdxT, forms a dodecamer of heterodimers.

It carries out the reaction aldehydo-D-ribose 5-phosphate + D-glyceraldehyde 3-phosphate + L-glutamine = pyridoxal 5'-phosphate + L-glutamate + phosphate + 3 H2O + H(+). Its pathway is cofactor biosynthesis; pyridoxal 5'-phosphate biosynthesis. Catalyzes the formation of pyridoxal 5'-phosphate from ribose 5-phosphate (RBP), glyceraldehyde 3-phosphate (G3P) and ammonia. The ammonia is provided by the PdxT subunit. Can also use ribulose 5-phosphate and dihydroxyacetone phosphate as substrates, resulting from enzyme-catalyzed isomerization of RBP and G3P, respectively. The polypeptide is Pyridoxal 5'-phosphate synthase subunit PdxS (Ruminiclostridium cellulolyticum (strain ATCC 35319 / DSM 5812 / JCM 6584 / H10) (Clostridium cellulolyticum)).